We begin with the raw amino-acid sequence, 360 residues long: Phospho-N-acetylmuramoyl-pentapeptide-transferase (360 aa).

The Periplasmic segment spans residues 1 to 25; that stretch reads MLVWLAEHLVKYYSGFNVFSYLTFR. The helical transmembrane segment at 26–46 threads the bilayer; that stretch reads AIVSLLTALFISLWMGPRMIA. At 47-71 the chain is on the cytoplasmic side; it reads HLQKLSFGQVVRNDGPESHFSKRGT. A helical membrane pass occupies residues 72 to 92; sequence PTMGGIMILTAIVISVLLWAY. A topological domain (periplasmic) is located at residue proline 93. Residues 94–114 form a helical membrane-spanning segment; it reads SNPYVWCVLVVLVGYGIIGFV. The Cytoplasmic segment spans residues 115 to 131; that stretch reads DDYRKVVRKDTKGLIAR. The chain crosses the membrane as a helical span at residues 132–152; the sequence is WKYFWMSVIALGVAFALYLAG. The Periplasmic segment spans residues 153–167; sequence KDTPATQLVVPFFKD. The chain crosses the membrane as a helical span at residues 168–188; sequence VMPQLGLFYILLAYFVIVGTG. Topologically, residues 189–198 are cytoplasmic; that stretch reads NAVNLTDGLD. A helical transmembrane segment spans residues 199 to 219; the sequence is GLAIMPTVFVAGGFALVAWAT. Topologically, residues 220–235 are periplasmic; it reads GNMNFASYLHIPYLRH. Residues 236-256 form a helical membrane-spanning segment; that stretch reads AGELVIVCTAIVGAGLGFLWF. The Cytoplasmic portion of the chain corresponds to 257–262; it reads NTYPAQ. Residues 263-283 traverse the membrane as a helical segment; sequence VFMGDVGSLALGGALGIIAVL. The Periplasmic segment spans residues 284-287; the sequence is LRQE. A helical membrane pass occupies residues 288-308; that stretch reads FLLVIMGGVFVVETLSVILQV. At 309-337 the chain is on the cytoplasmic side; it reads GSFKLRGQRIFRMAPIHHHYELKGWPEPR. The chain crosses the membrane as a helical span at residues 338–358; it reads VIVRFWIISLMLVLIGLATLK. The Periplasmic segment spans residues 359–360; that stretch reads VR.

Belongs to the glycosyltransferase 4 family. MraY subfamily. Requires Mg(2+) as cofactor.

The protein localises to the cell inner membrane. The catalysed reaction is UDP-N-acetyl-alpha-D-muramoyl-L-alanyl-gamma-D-glutamyl-meso-2,6-diaminopimeloyl-D-alanyl-D-alanine + di-trans,octa-cis-undecaprenyl phosphate = di-trans,octa-cis-undecaprenyl diphospho-N-acetyl-alpha-D-muramoyl-L-alanyl-D-glutamyl-meso-2,6-diaminopimeloyl-D-alanyl-D-alanine + UMP. Its pathway is cell wall biogenesis; peptidoglycan biosynthesis. Its function is as follows. Catalyzes the initial step of the lipid cycle reactions in the biosynthesis of the cell wall peptidoglycan: transfers peptidoglycan precursor phospho-MurNAc-pentapeptide from UDP-MurNAc-pentapeptide onto the lipid carrier undecaprenyl phosphate, yielding undecaprenyl-pyrophosphoryl-MurNAc-pentapeptide, known as lipid I. The protein is Phospho-N-acetylmuramoyl-pentapeptide-transferase of Escherichia coli O7:K1 (strain IAI39 / ExPEC).